The sequence spans 122 residues: Large ribosomal subunit protein uL14 (122 aa).

Belongs to the universal ribosomal protein uL14 family. As to quaternary structure, part of the 50S ribosomal subunit. Forms a cluster with proteins L3 and L19. In the 70S ribosome, L14 and L19 interact and together make contacts with the 16S rRNA in bridges B5 and B8.

In terms of biological role, binds to 23S rRNA. Forms part of two intersubunit bridges in the 70S ribosome. This Mycobacterium marinum (strain ATCC BAA-535 / M) protein is Large ribosomal subunit protein uL14.